A 325-amino-acid polypeptide reads, in one-letter code: Aldose 1-epimerase (325 aa).

73-74 (NR) lines the substrate pocket. The active-site Proton donor is H177. D230 is a binding site for substrate. E283 (proton acceptor) is an active-site residue.

The protein belongs to the aldose epimerase family.

It carries out the reaction alpha-D-glucose = beta-D-glucose. It participates in carbohydrate metabolism; hexose metabolism. The sequence is that of Aldose 1-epimerase (galM) from Bacillus subtilis (strain 168).